We begin with the raw amino-acid sequence, 291 residues long: tRNA dimethylallyltransferase (291 aa).

9-16 (GTTASGKS) lines the ATP pocket. 11 to 16 (TASGKS) lines the substrate pocket. The interval 34-37 (DSLA) is interaction with substrate tRNA.

This sequence belongs to the IPP transferase family. Monomer. The cofactor is Mg(2+).

It carries out the reaction adenosine(37) in tRNA + dimethylallyl diphosphate = N(6)-dimethylallyladenosine(37) in tRNA + diphosphate. Its function is as follows. Catalyzes the transfer of a dimethylallyl group onto the adenine at position 37 in tRNAs that read codons beginning with uridine, leading to the formation of N6-(dimethylallyl)adenosine (i(6)A). In Campylobacter concisus (strain 13826), this protein is tRNA dimethylallyltransferase.